Consider the following 1322-residue polypeptide: Ice nucleation protein InaA (1322 aa).

An octapeptide periodicity region spans residues 162–1281; sequence ATYGSTLSGT…LTAGENSVLI (1120 aa). 4 stretches are compositionally biased toward polar residues: residues 271-302, 327-350, 373-398, and 423-446; these read SLTA…QKGS, TQTA…QKGS, and GSTQ…QKGS. 4 disordered regions span residues 271–303, 327–358, 372–399, and 423–448; these read SLTA…KGSD, TQTA…GYGS, YGST…KGSD, and TQTA…GSDL.

The protein belongs to the bacterial ice nucleation protein family.

It is found in the cell outer membrane. Ice nucleation proteins enable bacteria to nucleate crystallization in supercooled water. The polypeptide is Ice nucleation protein InaA (inaA) (Pantoea ananas (Erwinia uredovora)).